A 151-amino-acid chain; its full sequence is Deoxyuridine 5'-triphosphate nucleotidohydrolase (151 aa).

Substrate contacts are provided by residues R70–G72, N83, and V87–D89.

This sequence belongs to the dUTPase family. Requires Mg(2+) as cofactor.

The enzyme catalyses dUTP + H2O = dUMP + diphosphate + H(+). The protein operates within pyrimidine metabolism; dUMP biosynthesis; dUMP from dCTP (dUTP route): step 2/2. Its function is as follows. This enzyme is involved in nucleotide metabolism: it produces dUMP, the immediate precursor of thymidine nucleotides and it decreases the intracellular concentration of dUTP so that uracil cannot be incorporated into DNA. The protein is Deoxyuridine 5'-triphosphate nucleotidohydrolase of Desulfitobacterium hafniense (strain DSM 10664 / DCB-2).